Here is a 454-residue protein sequence, read N- to C-terminus: Sensor histidine kinase YkoH (454 aa).

Topologically, residues Met1–Ser12 are cytoplasmic. A helical transmembrane segment spans residues Ile13–Ala33. At Leu34 to Lys153 the chain is on the extracellular side. Residues Ile154–Leu174 form a helical membrane-spanning segment. The Cytoplasmic portion of the chain corresponds to Ala175 to Arg454. The region spanning Arg176 to Asp230 is the HAMP domain. The Histidine kinase domain occupies Asp238–Asn450. The residue at position 241 (His241) is a Phosphohistidine; by autocatalysis.

It localises to the cell membrane. It catalyses the reaction ATP + protein L-histidine = ADP + protein N-phospho-L-histidine.. Probable member of the two-component regulatory system YkoH/YkoG. Potentially phosphorylates YkoG. The chain is Sensor histidine kinase YkoH (ykoH) from Bacillus subtilis (strain 168).